The following is a 142-amino-acid chain: Nucleoside diphosphate kinase (142 aa).

ATP contacts are provided by K11, F59, R87, T93, R104, and N114. H117 acts as the Pros-phosphohistidine intermediate in catalysis.

Belongs to the NDK family. Mg(2+) is required as a cofactor.

It is found in the cytoplasm. The enzyme catalyses a 2'-deoxyribonucleoside 5'-diphosphate + ATP = a 2'-deoxyribonucleoside 5'-triphosphate + ADP. It catalyses the reaction a ribonucleoside 5'-diphosphate + ATP = a ribonucleoside 5'-triphosphate + ADP. In terms of biological role, major role in the synthesis of nucleoside triphosphates other than ATP. The ATP gamma phosphate is transferred to the NDP beta phosphate via a ping-pong mechanism, using a phosphorylated active-site intermediate. In Hyperthermus butylicus (strain DSM 5456 / JCM 9403 / PLM1-5), this protein is Nucleoside diphosphate kinase.